The following is a 227-amino-acid chain: Esterase Rv3036c (227 aa).

Residues 3-23 traverse the membrane as a helical segment; sequence YLIATAVLVAVVLVGWPAAGA.

The protein belongs to the RsiV family.

Its subcellular location is the cell membrane. It is found in the secreted. The protein localises to the cell wall. The catalysed reaction is a fatty acid ester + H2O = an aliphatic alcohol + a fatty acid + H(+). It carries out the reaction an acetyl ester + H2O = an aliphatic alcohol + acetate + H(+). The enzyme catalyses a butanoate ester + H2O = an aliphatic alcohol + butanoate + H(+). It catalyses the reaction a hexanoate ester + H2O = an aliphatic alcohol + hexanoate + H(+). The catalysed reaction is a dodecanoate ester + H2O = an aliphatic alcohol + dodecanoate + H(+). It carries out the reaction a tetradecanoate ester + H2O = an aliphatic alcohol + tetradecanoate + H(+). The enzyme catalyses an octanoate ester + H2O = an aliphatic alcohol + octanoate + H(+). Hydrolyzes ester substrates carbon chain lengths ranging from C2 to C14. In vitro, acetate (C2), butyrate (C4) and caprylate (C6) are hydrolyzed with high efficiency. Has lower activity against laurate (C12), myristate (C14) and caproate (C8), and weak activity against palmitate (C16). This Mycobacterium tuberculosis (strain ATCC 25618 / H37Rv) protein is Esterase Rv3036c.